A 441-amino-acid polypeptide reads, in one-letter code: Enolase (441 aa).

Gln163 is a binding site for (2R)-2-phosphoglycerate. Residue Glu205 is the Proton donor of the active site. Positions 242, 288, and 315 each coordinate Mg(2+). (2R)-2-phosphoglycerate is bound by residues Lys340, Arg369, Ser370, and Lys391. Lys340 acts as the Proton acceptor in catalysis.

It belongs to the enolase family. Mg(2+) is required as a cofactor.

Its subcellular location is the cytoplasm. It is found in the secreted. The protein resides in the cell surface. The catalysed reaction is (2R)-2-phosphoglycerate = phosphoenolpyruvate + H2O. It participates in carbohydrate degradation; glycolysis; pyruvate from D-glyceraldehyde 3-phosphate: step 4/5. Its function is as follows. Catalyzes the reversible conversion of 2-phosphoglycerate (2-PG) into phosphoenolpyruvate (PEP). It is essential for the degradation of carbohydrates via glycolysis. In Ligilactobacillus salivarius (strain UCC118) (Lactobacillus salivarius), this protein is Enolase.